The sequence spans 173 residues: MQFPMGPACIFLRKGIAEKQRERPLGQDELDELREAFLEFDKDQDGFISYKDLGNLMRTMGYMPTEMELTELGQQIRMNLGGRVDFEDFVELMTPKLLAETAGMIGVQEMRDAFKEFDANGDGEITLAELQQAMQRLLGEKLTPREIAEVVQEADINGDGTVDFEEFVKMMSR.

EF-hand domains follow at residues 28-63 (DELDELREAFLEFDKDQDGFISYKDLGNLMRTMGYM), 82-99 (GRVDFEDFVELMTPKLLA), 105-140 (IGVQEMRDAFKEFDANGDGEITLAELQQAMQRLLGE), and 142-173 (LTPREIAEVVQEADINGDGTVDFEEFVKMMSR). Ca(2+) is bound by residues aspartate 41, aspartate 43, aspartate 45, and aspartate 52. Ca(2+) is bound by residues aspartate 118, asparagine 120, aspartate 122, glutamate 124, glutamate 129, aspartate 155, asparagine 157, aspartate 159, threonine 161, and glutamate 166.

Interacts with CACNA1C (via C-terminal CDB motif) in a calcium-dependent manner. Interacts with STXBP1. Interacts with MYO6. As to expression, expressed in inner and outer plexiform layers of the retina, and retinal bipolar cells (at protein level). Expressed in the inner hair cells (IHC) of the cochlea.

Its subcellular location is the cytoplasm. Its function is as follows. Inhibits calcium-dependent inactivation of L-type calcium channel and shifts voltage dependence of activation to more depolarized membrane potentials. Involved in the transmission of light signals. May positively regulate neurotransmitter vesicle endocytosis and exocytosis in a salt-dependent manner. May play a role in the extension and network organization of neurites. This is Calcium-binding protein 5 (Cabp5) from Mus musculus (Mouse).